A 432-amino-acid polypeptide reads, in one-letter code: Transcriptional adapter 3 (432 aa).

Positions 40–69 form a coiled coil; the sequence is IEELDTLQLELETLLSSASRRLRVLEAETQ. Disordered stretches follow at residues 88-127 and 275-313; these read KEHE…RNMQ and SPVE…HTKS. Polar residues predominate over residues 293–305; sequence DGASTSPRSQNKP. Residues 367–407 are a coiled coil; sequence LLRLAKEEMNRQELRQRVRMADNEVMDAFRKIMAARQKKRT.

It belongs to the NGG1 family.

It is found in the nucleus. Functionally, functions as a component of the PCAF complex. The PCAF complex is capable of efficiently acetylating histones in a nucleosomal context. The chain is Transcriptional adapter 3 (tada3) from Xenopus tropicalis (Western clawed frog).